Consider the following 132-residue polypeptide: MTNENSIGIEFDFPEGILGFENIKTFIIKDSKHKPFSIMQSINKDVSFLVTSPFNFLNEYLPNIEEKDWSDIDAKAEDEKVILCIINMHVNDYKDITANLKAPIIINKKKLLGKQAICTNEKYSLRHKVFKE.

Belongs to the FliW family. As to quaternary structure, interacts with translational regulator CsrA and flagellin(s).

It localises to the cytoplasm. In terms of biological role, acts as an anti-CsrA protein, binds CsrA and prevents it from repressing translation of its target genes, one of which is flagellin. Binds to flagellin and participates in the assembly of the flagellum. The polypeptide is Flagellar assembly factor FliW (Borreliella afzelii (strain PKo) (Borrelia afzelii)).